A 109-amino-acid chain; its full sequence is Elongin-C (109 aa).

The protein belongs to the SKP1 family.

Its subcellular location is the nucleus. SIII, also known as elongin, is a general transcription elongation factor that increases the RNA polymerase II transcription elongation past template-encoded arresting sites. Subunit A is transcriptionally active and its transcription activity is strongly enhanced by binding to the dimeric complex of the SIII regulatory subunits B and C (elongin BC complex). Functionally, the elongin BC complex seems to be involved as an adapter protein in the proteasomal degradation of target proteins via different E3 ubiquitin ligase complexes. In Dictyostelium discoideum (Social amoeba), this protein is Elongin-C (tceb1).